A 154-amino-acid polypeptide reads, in one-letter code: MKLLSKIMIIALAASMLQACNGPGGMNKQGTGTLLGGAGGALLGSQFGQGKGQLVGVGVGALLGAVLGGQIGAGMDEQDRRLAELTSQRALETAPSGSNVEWRNPDNGNYGYVTPNKTYRNSTGQYCREYTQTVVIGGKQQKAYGNACLQPDGQ.

The N-terminal stretch at 1–19 (MKLLSKIMIIALAASMLQA) is a signal peptide. Cysteine 20 carries N-palmitoyl cysteine lipidation. Cysteine 20 carries S-diacylglycerol cysteine lipidation.

It belongs to the rickettsiale 17 kDa surface antigen family.

It is found in the cell outer membrane. In Rickettsia montanensis, this protein is 17 kDa surface antigen (omp).